A 273-amino-acid chain; its full sequence is uncharacterized protein (273 aa).

Transmembrane regions (helical) follow at residues 24 to 44 (VGVSAIDGLIAAVVAGPVTIL) and 103 to 123 (IVGPWAIGFSLGLSLGGEAWA). The interval 132 to 194 (SDLPHHGRQS…QPPAQTQPYR (63 aa)) is disordered. Positions 164-179 (SSHHIRSPAVARHHKT) are enriched in basic residues. Low complexity predominate over residues 183–192 (TTQPPAQTQP).

It localises to the cell membrane. This is an uncharacterized protein from Sinorhizobium fredii (strain NBRC 101917 / NGR234).